A 338-amino-acid polypeptide reads, in one-letter code: Ketol-acid reductoisomerase (NADP(+)) (338 aa).

A KARI N-terminal Rossmann domain is found at 1–181 (MKIYYDKDCN…GGGRAGIIET (181 aa)). NADP(+) is bound by residues 24 to 27 (YGSQ), Lys47, Ser50, Ser52, and 82 to 85 (DEIQ). Residue His107 is part of the active site. Gly133 serves as a coordination point for NADP(+). The KARI C-terminal knotted domain occupies 182 to 327 (SFKEETETDL…ARLRSMMSWI (146 aa)). Residues Asp190, Glu194, Glu226, and Glu230 each contribute to the Mg(2+) site. Substrate is bound at residue Ser251.

It belongs to the ketol-acid reductoisomerase family. Mg(2+) serves as cofactor.

The enzyme catalyses (2R)-2,3-dihydroxy-3-methylbutanoate + NADP(+) = (2S)-2-acetolactate + NADPH + H(+). The catalysed reaction is (2R,3R)-2,3-dihydroxy-3-methylpentanoate + NADP(+) = (S)-2-ethyl-2-hydroxy-3-oxobutanoate + NADPH + H(+). It functions in the pathway amino-acid biosynthesis; L-isoleucine biosynthesis; L-isoleucine from 2-oxobutanoate: step 2/4. The protein operates within amino-acid biosynthesis; L-valine biosynthesis; L-valine from pyruvate: step 2/4. Functionally, involved in the biosynthesis of branched-chain amino acids (BCAA). Catalyzes an alkyl-migration followed by a ketol-acid reduction of (S)-2-acetolactate (S2AL) to yield (R)-2,3-dihydroxy-isovalerate. In the isomerase reaction, S2AL is rearranged via a Mg-dependent methyl migration to produce 3-hydroxy-3-methyl-2-ketobutyrate (HMKB). In the reductase reaction, this 2-ketoacid undergoes a metal-dependent reduction by NADPH to yield (R)-2,3-dihydroxy-isovalerate. This is Ketol-acid reductoisomerase (NADP(+)) from Geobacter sulfurreducens (strain ATCC 51573 / DSM 12127 / PCA).